Consider the following 453-residue polypeptide: Gamma-glutamylpolyamine synthetase GlnA2 (453 aa).

A GS beta-grasp domain is found at 15–100 (RDIRFVRLWF…MFCDILMPDG (86 aa)). Residues 107–453 (PRYVLKRALA…FELRKSLPVL (347 aa)) form the GS catalytic domain. E130 and E132 together coordinate Mg(2+). E182 contacts ATP. Mg(2+)-binding residues include E187 and E194. G239 serves as a coordination point for L-glutamate. H243 is a binding site for Mg(2+). 245-247 (HLS) is a binding site for ATP. The L-glutamate site is built by R296, E310, and R322. Residues R322 and R327 each contribute to the ATP site. E342 contacts Mg(2+). R344 serves as a coordination point for L-glutamate.

This sequence belongs to the glutamine synthetase family. The cofactor is Mg(2+).

The catalysed reaction is putrescine + L-glutamate + ATP = gamma-L-glutamylputrescine + ADP + phosphate + H(+). The enzyme catalyses spermine + L-glutamate + ATP = gamma-L-glutamylspermine + ADP + phosphate + H(+). It carries out the reaction spermidine + L-glutamate + ATP = gamma-L-glutamylspermidine + ADP + phosphate + H(+). It catalyses the reaction cadaverine + L-glutamate + ATP = gamma-L-glutamylcadaverine + ADP + phosphate + H(+). It participates in amine and polyamine degradation; putrescine degradation. The protein operates within amine and polyamine degradation; spermidine degradation. It functions in the pathway amine and polyamine degradation; spermine degradation. No effect on activity with glutamine synthetase (GS) inhibitor methionine sulfoximine (MSO). In terms of biological role, involved in the catabolism of polyamines. Catalyzes the ATP-dependent gamma-glutamylation of polyamines. Substrates include putrescine, cadaverine, spermidine and spermine, with a preference for short-chain polyamine putrescine. No complementation of the L-glutamine auxotrophy of an E.coli glnA mutant. Together with GlnA3, enables survival of S.coelicolor under exposure to high local environmental polyamine concentrations, which is toxic to the cells. In Streptomyces coelicolor (strain ATCC BAA-471 / A3(2) / M145), this protein is Gamma-glutamylpolyamine synthetase GlnA2.